The following is a 373-amino-acid chain: D-alanine--D-alanine ligase (373 aa).

Residues 156–363 (KKLLAAEGLP…YPTLLAAMVD (208 aa)) enclose the ATP-grasp domain. ATP is bound at residue 184–239 (RERLGLPVFVKPARGGSSIGVSRVTAWDELPAAVALARRHDPKVIVEAAVIGRELE). Mg(2+)-binding residues include Asp318, Glu330, and Asn332.

This sequence belongs to the D-alanine--D-alanine ligase family. The cofactor is Mg(2+). It depends on Mn(2+) as a cofactor.

The protein localises to the cytoplasm. It catalyses the reaction 2 D-alanine + ATP = D-alanyl-D-alanine + ADP + phosphate + H(+). Its pathway is cell wall biogenesis; peptidoglycan biosynthesis. Cell wall formation. The chain is D-alanine--D-alanine ligase from Mycolicibacterium smegmatis (strain ATCC 700084 / mc(2)155) (Mycobacterium smegmatis).